The following is a 741-amino-acid chain: Mitofusin-1 (741 aa).

Residues 1–584 (MAETVSPLKH…AAQEELMITL (584 aa)) are Cytoplasmic-facing. The interval 9–73 (KHFVLAKKAI…LAVIGEVLSR (65 aa)) is part of a helix bundle domain, formed by helices from N-terminal and C-terminal regions. A Dynamin-type G domain is found at 72-321 (SRRHMKVAFF…ARLQEFQNFE (250 aa)). The G1 motif stretch occupies residues 82–89 (GRTSSGKS). 85-90 (SSGKSS) contacts GTP. Residues 108–109 (TT) are G2 motif. The interval 178 to 181 (DSPG) is G3 motif. Position 237 to 240 (237 to 240 (NRWD)) interacts with GTP. The G4 motif stretch occupies residues 237-240 (NRWD). A region of interest (G5 motif) is located at residue E266. Positions 284 and 286 each coordinate GTP. Residues 338-364 (EQHTIRAKQILDTVKNILDSVNVAAAE) are part of a helix bundle domain, formed by helices from N-terminal and C-terminal regions. Residues 371 to 408 (EEREDQIDRLDFIRNQMNLLTLDVKKKIKEVTEEVANK) are a coiled coil. The helical transmembrane segment at 585–605 (ITGLASLTSRTSMGIIVVGGV) threads the bilayer. Over 606–608 (IWK) the chain is Mitochondrial intermembrane. A helical transmembrane segment spans residues 609 to 629 (TVGWKLISVTLSMYGALYLYE). Residues 630-741 (RLTWTTRAKE…QFLHPSSGES (112 aa)) are Cytoplasmic-facing. A coiled-coil region spans residues 677-735 (FARLCQQVDVTQKHLEEEIARLSKEIDQLEKIQNNSKLLRNKAVQLESELENFSKQFLH). The interval 703–734 (DQLEKIQNNSKLLRNKAVQLESELENFSKQFL) is part of a helix bundle domain, formed by helices from N-terminal and C-terminal regions.

This sequence belongs to the TRAFAC class dynamin-like GTPase superfamily. Dynamin/Fzo/YdjA family. Mitofusin subfamily. As to quaternary structure, homodimer, also in the absence of bound GTP. Forms higher oligomers in the presence of a transition state GTP analog. Forms homomultimers and heteromultimers with MFN2. Oligomerization is essential for mitochondrion fusion. Component of a high molecular weight multiprotein complex. Interacts with VAT1. Interacts with THG1L; THG1L probably functions as a guanyl-nucleotide exchange factor/GEF, activating MFN1. In terms of processing, ubiquitinated by MARCHF5. When mitochondria are depolarized and dysfunctional, it is ubiquitinated by a SCF (SKP1-CUL1-F-box protein) E3 ubiquitin-protein ligase complex that contains FBXO7 and PRKN. Ubiquitinated by non-degradative ubiquitin by PRKN, promoting mitochondrial fusion; deubiquitination by USP30 inhibits mitochondrial fusion. Detected in adult heart. Detected in embryos (at protein level). Widely expressed.

The protein resides in the mitochondrion outer membrane. It catalyses the reaction GTP + H2O = GDP + phosphate + H(+). In terms of biological role, mitochondrial outer membrane GTPase that mediates mitochondrial clustering and fusion. Membrane clustering requires GTPase activity. It may involve a major rearrangement of the coiled coil domains. Mitochondria are highly dynamic organelles, and their morphology is determined by the equilibrium between mitochondrial fusion and fission events. Overexpression induces the formation of mitochondrial networks (in vitro). Has low GTPase activity. This chain is Mitofusin-1 (Mfn1), found in Mus musculus (Mouse).